We begin with the raw amino-acid sequence, 452 residues long: NAD kinase 2, mitochondrial (452 aa).

The N-terminal 50 residues, 1–50 (MTCYRGFLLGSCRRVAGGRAALRGSGSGADGRRHLGHGQPRELAGGGSPA), are a transit peptide targeting the mitochondrion. The segment at 23–52 (RGSGSGADGRRHLGHGQPRELAGGGSPADG) is disordered. Lys-64 is subject to N6-acetyllysine; alternate. At Lys-64 the chain carries N6-succinyllysine; alternate. Ser-176 carries the post-translational modification Phosphoserine. Lys-312 is subject to N6-succinyllysine. Lys-327 bears the N6-acetyllysine; alternate mark. Lys-327 carries the N6-succinyllysine; alternate modification. Residue Ser-377 is modified to Phosphoserine. Position 407 is an N6-acetyllysine (Lys-407).

The protein belongs to the NAD kinase family. As to quaternary structure, homodimer.

It localises to the mitochondrion. The enzyme catalyses NAD(+) + ATP = ADP + NADP(+) + H(+). Inhibited by NADH, NADPH and NADP(+). In terms of biological role, mitochondrial NAD(+) kinase that phosphorylates NAD(+) to yield NADP(+). Can use both ATP or inorganic polyphosphate as the phosphoryl donor. The polypeptide is NAD kinase 2, mitochondrial (Nadk2) (Mus musculus (Mouse)).